Reading from the N-terminus, the 144-residue chain is uncharacterized protein (144 aa).

Positions 23–82 form a coiled coil; it reads EELYKKLENNLRKIETSYLDSKHCQDFKRKIEYYKIVPLISETKEIIKVLIQKIETLEIK.

This is an uncharacterized protein from Acanthamoeba polyphaga mimivirus (APMV).